Here is a 576-residue protein sequence, read N- to C-terminus: Potassium-transporting ATPase potassium-binding subunit (576 aa).

Transmembrane regions (helical) follow at residues glutamine 4–glycine 24, alanine 65–glutamine 85, alanine 136–isoleucine 156, valine 179–isoleucine 199, leucine 257–phenylalanine 277, glycine 288–leucine 308, phenylalanine 341–valine 361, leucine 371–glycine 391, glycine 393–glycine 413, methionine 430–leucine 450, leucine 497–isoleucine 517, and leucine 540–alanine 560.

It belongs to the KdpA family. The system is composed of three essential subunits: KdpA, KdpB and KdpC.

The protein localises to the cell inner membrane. Part of the high-affinity ATP-driven potassium transport (or Kdp) system, which catalyzes the hydrolysis of ATP coupled with the electrogenic transport of potassium into the cytoplasm. This subunit binds the periplasmic potassium ions and delivers the ions to the membrane domain of KdpB through an intramembrane tunnel. The polypeptide is Potassium-transporting ATPase potassium-binding subunit (Methylibium petroleiphilum (strain ATCC BAA-1232 / LMG 22953 / PM1)).